The sequence spans 357 residues: Phenylalanine--tRNA ligase alpha subunit (357 aa).

Glu-257 is a Mg(2+) binding site.

The protein belongs to the class-II aminoacyl-tRNA synthetase family. Phe-tRNA synthetase alpha subunit type 1 subfamily. As to quaternary structure, tetramer of two alpha and two beta subunits. Mg(2+) is required as a cofactor.

It localises to the cytoplasm. It carries out the reaction tRNA(Phe) + L-phenylalanine + ATP = L-phenylalanyl-tRNA(Phe) + AMP + diphosphate + H(+). This chain is Phenylalanine--tRNA ligase alpha subunit, found in Ruegeria pomeroyi (strain ATCC 700808 / DSM 15171 / DSS-3) (Silicibacter pomeroyi).